The following is an 85-amino-acid chain: Large ribosomal subunit protein bL27 (85 aa).

The disordered stretch occupies residues 1-22 (MAHKKAGGSTRNGRDSESKRLG).

It belongs to the bacterial ribosomal protein bL27 family.

This is Large ribosomal subunit protein bL27 from Vibrio parahaemolyticus serotype O3:K6 (strain RIMD 2210633).